Consider the following 426-residue polypeptide: UDP-N-acetylglucosamine 1-carboxyvinyltransferase (426 aa).

Position 24–25 (24–25 (KN)) interacts with phosphoenolpyruvate. Residue R95 participates in UDP-N-acetyl-alpha-D-glucosamine binding. C119 acts as the Proton donor in catalysis. C119 is modified (2-(S-cysteinyl)pyruvic acid O-phosphothioketal). UDP-N-acetyl-alpha-D-glucosamine-binding positions include 124-128 (RPVDQ), D308, and V330.

Belongs to the EPSP synthase family. MurA subfamily.

Its subcellular location is the cytoplasm. The catalysed reaction is phosphoenolpyruvate + UDP-N-acetyl-alpha-D-glucosamine = UDP-N-acetyl-3-O-(1-carboxyvinyl)-alpha-D-glucosamine + phosphate. It functions in the pathway cell wall biogenesis; peptidoglycan biosynthesis. Cell wall formation. Adds enolpyruvyl to UDP-N-acetylglucosamine. The protein is UDP-N-acetylglucosamine 1-carboxyvinyltransferase of Deinococcus radiodurans (strain ATCC 13939 / DSM 20539 / JCM 16871 / CCUG 27074 / LMG 4051 / NBRC 15346 / NCIMB 9279 / VKM B-1422 / R1).